We begin with the raw amino-acid sequence, 218 residues long: Histidine biosynthesis bifunctional protein HisIE (218 aa).

The tract at residues 1-131 is phosphoribosyl-AMP cyclohydrolase; the sequence is MAPHQFKSKG…GDYDLPPADT (131 aa). Residues 132–218 form a phosphoribosyl-ATP pyrophosphohydrolase region; the sequence is LSQVFRVVEE…VYRALQQRRR (87 aa).

It in the N-terminal section; belongs to the PRA-CH family. This sequence in the C-terminal section; belongs to the PRA-PH family.

The protein localises to the cytoplasm. It carries out the reaction 1-(5-phospho-beta-D-ribosyl)-ATP + H2O = 1-(5-phospho-beta-D-ribosyl)-5'-AMP + diphosphate + H(+). It catalyses the reaction 1-(5-phospho-beta-D-ribosyl)-5'-AMP + H2O = 1-(5-phospho-beta-D-ribosyl)-5-[(5-phospho-beta-D-ribosylamino)methylideneamino]imidazole-4-carboxamide. It participates in amino-acid biosynthesis; L-histidine biosynthesis; L-histidine from 5-phospho-alpha-D-ribose 1-diphosphate: step 2/9. Its pathway is amino-acid biosynthesis; L-histidine biosynthesis; L-histidine from 5-phospho-alpha-D-ribose 1-diphosphate: step 3/9. The chain is Histidine biosynthesis bifunctional protein HisIE from Gloeobacter violaceus (strain ATCC 29082 / PCC 7421).